Consider the following 130-residue polypeptide: Protein ApaG (130 aa).

Positions 3 to 127 constitute an ApaG domain; that stretch reads RAITRNIQVT…FSLDVPDVRR (125 aa).

The protein is Protein ApaG of Xanthobacter autotrophicus (strain ATCC BAA-1158 / Py2).